Here is a 90-residue protein sequence, read N- to C-terminus: Caspase recruitment domain-containing protein 18 (90 aa).

One can recognise a CARD domain in the interval 1–90 (MADQLLRKKR…PQLASKMGLH (90 aa)).

Interacts with pro-CASP1. Interacts with CARD8. As to expression, primarily expressed in the heart and placenta.

Functionally, inhibits generation of IL-1-beta by interacting with caspase-1 and preventing its association with RIP2. Down-regulates the release of IL1B. This is Caspase recruitment domain-containing protein 18 (CARD18) from Homo sapiens (Human).